Consider the following 460-residue polypeptide: UDP-N-acetylmuramoylalanine--D-glutamate ligase (460 aa).

An ATP-binding site is contributed by 120 to 126; the sequence is GSNGKTT.

It belongs to the MurCDEF family.

It localises to the cytoplasm. The catalysed reaction is UDP-N-acetyl-alpha-D-muramoyl-L-alanine + D-glutamate + ATP = UDP-N-acetyl-alpha-D-muramoyl-L-alanyl-D-glutamate + ADP + phosphate + H(+). The protein operates within cell wall biogenesis; peptidoglycan biosynthesis. Its function is as follows. Cell wall formation. Catalyzes the addition of glutamate to the nucleotide precursor UDP-N-acetylmuramoyl-L-alanine (UMA). The polypeptide is UDP-N-acetylmuramoylalanine--D-glutamate ligase (Lactobacillus delbrueckii subsp. bulgaricus (strain ATCC BAA-365 / Lb-18)).